We begin with the raw amino-acid sequence, 303 residues long: Probable serine acetyltransferase 1 (303 aa).

Disordered stretches follow at residues 1–36 and 271–290; these read MTAGQPLRDDPQPRRHSPPALHPAVVPAYPPPESDA and NPARLLGGKKGDDMPGESMD.

The protein belongs to the transferase hexapeptide repeat family. Homomultimer.

It catalyses the reaction L-serine + acetyl-CoA = O-acetyl-L-serine + CoA. The protein operates within amino-acid biosynthesis; L-cysteine biosynthesis; L-cysteine from L-serine: step 1/2. The polypeptide is Probable serine acetyltransferase 1 (SAT1) (Oryza sativa subsp. japonica (Rice)).